We begin with the raw amino-acid sequence, 315 residues long: Olfactory receptor 5P59 (315 aa).

Over 1-28 the chain is Extracellular; the sequence is MAFLQDGNHTAVTEFILLGLTDDPVLRV. Asparagine 8 carries N-linked (GlcNAc...) asparagine glycosylation. The chain crosses the membrane as a helical span at residues 29 to 49; the sequence is VLFTIILCIYLVTVFGNLSTI. Residues 50–57 lie on the Cytoplasmic side of the membrane; sequence LLIRVSSQ. Residues 58 to 78 traverse the membrane as a helical segment; that stretch reads LHHPMYFFLSHLASVDIGISS. Residues 79–102 are Extracellular-facing; it reads SVTPSMLVNFLLERSTISYLGCGI. A disulfide bridge connects residues cysteine 100 and cysteine 193. The chain crosses the membrane as a helical span at residues 103–123; sequence QLGSADFIASVECFLLAAMAY. Topologically, residues 124-136 are cytoplasmic; that stretch reads DRFMAVCNPLLYS. The helical transmembrane segment at 137 to 157 threads the bilayer; sequence TKMSTQVCVQLVVGSYIGGFL. Over 158 to 200 the chain is Extracellular; that stretch reads NASLIVTVYFFSFLFCGPNRIDHFFCDFAPLAELSCSDVSVSV. The chain crosses the membrane as a helical span at residues 201 to 221; the sequence is LIISFSAGSVTMITVFVIVIS. The Cytoplasmic portion of the chain corresponds to 222-241; it reads YSYILITILKMHSTEGRHKA. A helical transmembrane segment spans residues 242 to 262; sequence FSTCTSHLTAVTLYYGTITFI. Topologically, residues 263 to 275 are extracellular; the sequence is YVMPKSSFSTDQN. Residues 276-296 form a helical membrane-spanning segment; it reads KVVSVFYMVMIPMLNPLIYSL. Topologically, residues 297–315 are cytoplasmic; it reads SNNEIKGALKRQLGMKTLS.

Belongs to the G-protein coupled receptor 1 family.

It is found in the cell membrane. In terms of biological role, potential odorant receptor. This chain is Olfactory receptor 5P59, found in Mus musculus (Mouse).